A 308-amino-acid chain; its full sequence is Reticulon-like protein 1 (308 aa).

Polar residues-rich tracts occupy residues 1–17 (MSEQ…SVTA) and 41–66 (PSTE…IQNI). 2 disordered regions span residues 1–22 (MSEQ…DVAA) and 41–92 (PSTE…CPVS). The N-linked (GlcNAc...) asparagine glycan is linked to Asn-65. Residues 67–81 (SSSSSEPHHTSQSTP) show a composition bias toward low complexity. Asn-113 and Asn-135 each carry an N-linked (GlcNAc...) asparagine glycan. A Reticulon domain is found at 127 to 308 (LWSVLTWKNT…TETINTTVNK (182 aa)). The next 4 membrane-spanning stretches (helical) occupy residues 138-158 (CSFS…WINL), 166-186 (FRYV…ASNG), 233-253 (PILT…SGFL), and 255-275 (YKSL…LYVC). N-linked (GlcNAc...) asparagine glycosylation occurs at Asn-303.

In terms of assembly, interacts with TTS1 and YOP1.

The protein resides in the endoplasmic reticulum membrane. The protein localises to the nucleus membrane. In terms of biological role, required for the correct positioning of the cellular division plane by delimiting the actomyosin ring assembly at the cell equator. Overexpression causes cell lysis. The chain is Reticulon-like protein 1 (rtn1) from Schizosaccharomyces pombe (strain 972 / ATCC 24843) (Fission yeast).